Consider the following 676-residue polypeptide: Potassium-transporting ATPase ATP-binding subunit (676 aa).

A run of 4 helical transmembrane segments spans residues 24–44 (NPVMFVVYLGALITTILCFYP), 45–65 (MGIPLWFNISITIFLWLTLLF), 212–232 (IFLITLTIIFLTVSITLVPFT), and 246–266 (SLVIVIALLICLAPTTIGALI). Asp-302 serves as the catalytic 4-aspartylphosphate intermediate. ATP-binding positions include Asp-339, Glu-343, 372–379 (FSAKTRMS), and Lys-390. Mg(2+)-binding residues include Asp-513 and Asp-517. 3 consecutive transmembrane segments (helical) span residues 573 to 593 (FSIANDIAKYFAVIPVLFYSI), 611 to 631 (AILSAVIYNAVVIVALIPLAL), and 656 to 676 (GIIAPFIFIKIIDLILSLIIL).

It belongs to the cation transport ATPase (P-type) (TC 3.A.3) family. Type IA subfamily. As to quaternary structure, the system is composed of three essential subunits: KdpA, KdpB and KdpC.

Its subcellular location is the cell membrane. It catalyses the reaction K(+)(out) + ATP + H2O = K(+)(in) + ADP + phosphate + H(+). In terms of biological role, part of the high-affinity ATP-driven potassium transport (or Kdp) system, which catalyzes the hydrolysis of ATP coupled with the electrogenic transport of potassium into the cytoplasm. This subunit is responsible for energy coupling to the transport system and for the release of the potassium ions to the cytoplasm. The chain is Potassium-transporting ATPase ATP-binding subunit from Enterococcus faecalis (strain ATCC 700802 / V583).